A 72-amino-acid chain; its full sequence is Protein kish-A (72 aa).

The N-terminal stretch at Met1–Ser26 is a signal peptide. Topologically, residues Leu27–Lys53 are extracellular. The N-linked (GlcNAc...) asparagine glycan is linked to Asn35. Residues Ser54–Ile71 traverse the membrane as a helical segment. A topological domain (cytoplasmic) is located at residue Gln72.

The protein belongs to the KISH family.

The protein resides in the golgi apparatus membrane. In terms of biological role, involved in the early part of the secretory pathway. This chain is Protein kish-A (Tmem167a), found in Mus musculus (Mouse).